The primary structure comprises 881 residues: Band 4.1-like protein 1 (881 aa).

At Met1 the chain carries N-acetylmethionine. The interval 1-88 is disordered; sequence MTTETGPDSE…TPSKAQKSPQ (88 aa). Residues 17-35 show a composition bias toward low complexity; it reads EAPQQPEAAAAVTTPVTPA. Phosphothreonine is present on Thr30. The segment covering 38 to 50 has biased composition (basic and acidic residues); that stretch reads GHPEANSNEKHPS. The residue at position 75 (Ser75) is a Phosphoserine. Positions 76-87 are enriched in polar residues; sequence ERTTPSKAQKSP. Residue Thr79 is modified to Phosphothreonine. Residues 97 to 378 form the FERM domain; the sequence is AICRVTLLDA…EHHTFFRLVS (282 aa). Tyr343 carries the phosphotyrosine modification. A phosphoserine mark is found at Ser378, Ser430, and Ser437. Residues 428–501 form a disordered region; sequence SRSLDGAEFS…HKQEFLDKPE (74 aa). Basic and acidic residues predominate over residues 444 to 457; the sequence is ENHDAGPDGDKRDE. A phosphoserine mark is found at Ser461 and Ser466. A compositionally biased stretch (basic and acidic residues) spans 466-501; the sequence is SEAEEGEVRTPTKIKELKPEQETTPRHKQEFLDKPE. Thr475 carries the post-translational modification Phosphothreonine. A spectrin--actin-binding region spans residues 483 to 541; that stretch reads KPEQETTPRHKQEFLDKPEDVLLKHQASINELKRTLKEPNSKLIHRDRDWERERRLPSS. Residue Ser510 is modified to Phosphoserine. Basic and acidic residues predominate over residues 514-538; the sequence is LKRTLKEPNSKLIHRDRDWERERRL. Residues 514–596 form a disordered region; the sequence is LKRTLKEPNS…QERDTVFLKD (83 aa). A phosphoserine mark is found at Ser540, Ser541, Ser544, and Ser546. Thr550 bears the Phosphothreonine mark. Residues 550-577 show a composition bias toward basic and acidic residues; it reads TPEKANERAGLREGSEEKVKPPRPRAPE. Phosphoserine is present on residues Ser564 and Ser578. Position 580 is a phosphothreonine (Thr580). 7 positions are modified to phosphoserine: Ser639, Ser648, Ser650, Ser667, Ser672, Ser678, and Ser685. The segment at 642 to 699 is disordered; it reads ELDRDKSDSDTEGLLFSRDLNKGAPSQDDESGGIEDSPDRGACSTPDMPQFEPVKTET. Position 686 is a phosphothreonine (Thr686). 3 positions are modified to phosphoserine: Ser722, Ser784, and Ser870. The segment at 746-881 is C-terminal (CTD); sequence SITTETISTT…EERDKKPQES (136 aa).

As to quaternary structure, interacts with AGAP2. Highest expression in brain, lower in heart, kidney, pancreas, placenta, lung and skeletal muscle.

Its subcellular location is the cytoplasm. It is found in the cytoskeleton. Functionally, may function to confer stability and plasticity to neuronal membrane via multiple interactions, including the spectrin-actin-based cytoskeleton, integral membrane channels and membrane-associated guanylate kinases. This is Band 4.1-like protein 1 from Homo sapiens (Human).